Consider the following 378-residue polypeptide: MNAPSIAQDVTTVPVSLGNRSYDILIGKGLVDRAGEELAKRLKGVRVAVVTDENVAKAHLERLTASFAKAGVDVTPVIVAPGEKSKSFGTLETVTNAVLAARLERGDAVVAFGGGVVGDLSGFVAGIVRRGMNFVQMPTSLLSQVDSSVGGKTGVNTAHGKNLVGVFYQPQLVLADTEVLDTLSPREFRAGYAEVAKYGLIDRPDFFEWLEQNWQEVFSGGAARTQAIAESCRCKAAVVARDERETGDRALLNLGHTFGHALETATGYDSTRLVHGEGVAIGMALAHRFSVKMNLCGIEDAERVEAHLKAVGLPYRLSDVPGGLPPAEKLMDYIAQDKKVARGALTFILTRGIGQSFIAKDVPPAAVLGFLKERLETK.

Residues 115–119 (GVVGD), 139–140 (TS), Lys152, and Lys161 contribute to the NAD(+) site. Positions 194, 256, and 275 each coordinate Zn(2+).

It belongs to the sugar phosphate cyclases superfamily. Dehydroquinate synthase family. Requires Co(2+) as cofactor. It depends on Zn(2+) as a cofactor. The cofactor is NAD(+).

It localises to the cytoplasm. The catalysed reaction is 7-phospho-2-dehydro-3-deoxy-D-arabino-heptonate = 3-dehydroquinate + phosphate. It participates in metabolic intermediate biosynthesis; chorismate biosynthesis; chorismate from D-erythrose 4-phosphate and phosphoenolpyruvate: step 2/7. In terms of biological role, catalyzes the conversion of 3-deoxy-D-arabino-heptulosonate 7-phosphate (DAHP) to dehydroquinate (DHQ). The polypeptide is 3-dehydroquinate synthase (Brucella anthropi (strain ATCC 49188 / DSM 6882 / CCUG 24695 / JCM 21032 / LMG 3331 / NBRC 15819 / NCTC 12168 / Alc 37) (Ochrobactrum anthropi)).